The following is a 276-amino-acid chain: Rhomboid protease GlpG (276 aa).

Transmembrane regions (helical) follow at residues 94-114 (GPVTWVMMIACVVVFIAMQIL), 142-162 (ALMHFSLMHILFNLLWWWYLG), 169-189 (LGSGKLIVITLISALLSGYVQ), 192-212 (FSGPWFGGLSGVVYALMGYVW), 229-249 (LIIFALIWIVAGWFDLFGMSM), and 250-270 (ANGAHIAGLAVGLAMAFVDSL). Residue S201 is the Nucleophile of the active site. H254 is an active-site residue.

This sequence belongs to the peptidase S54 family.

It localises to the cell inner membrane. It catalyses the reaction Cleaves type-1 transmembrane domains using a catalytic dyad composed of serine and histidine that are contributed by different transmembrane domains.. In terms of biological role, rhomboid-type serine protease that catalyzes intramembrane proteolysis. The sequence is that of Rhomboid protease GlpG from Shigella flexneri serotype 5b (strain 8401).